A 256-amino-acid chain; its full sequence is UPF0246 protein Sbal_1048 (256 aa).

This sequence belongs to the UPF0246 family.

The chain is UPF0246 protein Sbal_1048 from Shewanella baltica (strain OS155 / ATCC BAA-1091).